The primary structure comprises 229 residues: Demethylmenaquinone methyltransferase (229 aa).

S-adenosyl-L-methionine-binding positions include T62, D80, 100–101 (DG), and S117.

Belongs to the class I-like SAM-binding methyltransferase superfamily. MenG/UbiE family.

The catalysed reaction is a 2-demethylmenaquinol + S-adenosyl-L-methionine = a menaquinol + S-adenosyl-L-homocysteine + H(+). Its pathway is quinol/quinone metabolism; menaquinone biosynthesis; menaquinol from 1,4-dihydroxy-2-naphthoate: step 2/2. Its function is as follows. Methyltransferase required for the conversion of demethylmenaquinol (DMKH2) to menaquinol (MKH2). In Corynebacterium kroppenstedtii (strain DSM 44385 / JCM 11950 / CIP 105744 / CCUG 35717), this protein is Demethylmenaquinone methyltransferase.